A 177-amino-acid chain; its full sequence is Large ribosomal subunit protein uL6 (177 aa).

Belongs to the universal ribosomal protein uL6 family. Part of the 50S ribosomal subunit.

Functionally, this protein binds to the 23S rRNA, and is important in its secondary structure. It is located near the subunit interface in the base of the L7/L12 stalk, and near the tRNA binding site of the peptidyltransferase center. The polypeptide is Large ribosomal subunit protein uL6 (Bartonella quintana (strain Toulouse) (Rochalimaea quintana)).